Here is a 1017-residue protein sequence, read N- to C-terminus: Genome polyprotein (1017 aa).

The region spanning 1 to 195 (LSVTRKQCLE…IAWGPLNLVE (195 aa)) is the Peptidase C4 domain. Catalysis depends on for nuclear inclusion protein A activity residues Asp-57 and Cys-127. The RdRp catalytic domain maps to 461-585 (WTYCHADGSQ…AVKDEDVWLY (125 aa)). The segment covering 746-760 (DAGKESKKDASDKGN) has biased composition (basic and acidic residues). The tract at residues 746–787 (DAGKESKKDASDKGNKPQNSQVGQGSKEPTKTGTVSKDVNVG) is disordered.

This sequence belongs to the potyviridae genome polyprotein family. Genome polyprotein of potyviruses undergoes post-translational proteolytic processing by the main proteinase NIa-pro resulting in the production of at least ten individual proteins. The P1 proteinase and the HC-pro cleave only their respective C-termini autocatalytically. 6K1 is essential for proper proteolytic separation of P3 from CI.

It localises to the virion. The enzyme catalyses Hydrolyzes glutaminyl bonds, and activity is further restricted by preferences for the amino acids in P6 - P1' that vary with the species of potyvirus, e.g. Glu-Xaa-Xaa-Tyr-Xaa-Gln-|-(Ser or Gly) for the enzyme from tobacco etch virus. The natural substrate is the viral polyprotein, but other proteins and oligopeptides containing the appropriate consensus sequence are also cleaved.. It catalyses the reaction RNA(n) + a ribonucleoside 5'-triphosphate = RNA(n+1) + diphosphate. In terms of biological role, has RNA-binding and proteolytic activities. Functionally, an RNA-dependent RNA polymerase that plays an essential role in the virus replication. Its function is as follows. Involved in aphid transmission, cell-to-cell and systemis movement, encapsidation of the viral RNA and in the regulation of viral RNA amplification. This is Genome polyprotein from Watermelon mosaic virus II (isolate USA).